A 346-amino-acid polypeptide reads, in one-letter code: tRNA-specific 2-thiouridylase MnmA (346 aa).

Ala6 to Ser13 contacts ATP. The Nucleophile role is filled by Cys90. Cys90 and Cys187 are joined by a disulfide. Position 114 (Gly114) interacts with ATP. The interaction with tRNA stretch occupies residues Lys137–Gln139. Cys187 serves as the catalytic Cysteine persulfide intermediate. Positions Arg292 to Tyr293 are interaction with tRNA.

The protein belongs to the MnmA/TRMU family.

It localises to the cytoplasm. The catalysed reaction is S-sulfanyl-L-cysteinyl-[protein] + uridine(34) in tRNA + AH2 + ATP = 2-thiouridine(34) in tRNA + L-cysteinyl-[protein] + A + AMP + diphosphate + H(+). Its function is as follows. Catalyzes the 2-thiolation of uridine at the wobble position (U34) of tRNA, leading to the formation of s(2)U34. The chain is tRNA-specific 2-thiouridylase MnmA from Nitratidesulfovibrio vulgaris (strain ATCC 29579 / DSM 644 / CCUG 34227 / NCIMB 8303 / VKM B-1760 / Hildenborough) (Desulfovibrio vulgaris).